Reading from the N-terminus, the 177-residue chain is Glutamyl-tRNA(Gln) amidotransferase subunit F, mitochondrial (177 aa).

Residues 1–16 constitute a mitochondrion transit peptide; that stretch reads MIRINSRGLTVSTRRF. A disordered region spans residues 148–177; it reads PAKGETQGSFNVANMNPRNRPFATIRSKQG. Residues 153 to 164 show a composition bias toward polar residues; sequence TQGSFNVANMNP.

This sequence belongs to the GatF family. In terms of assembly, subunit of the heterotrimeric GatFAB amidotransferase (AdT) complex, composed of A, B and F subunits.

The protein localises to the mitochondrion inner membrane. It carries out the reaction L-glutamyl-tRNA(Gln) + L-glutamine + ATP + H2O = L-glutaminyl-tRNA(Gln) + L-glutamate + ADP + phosphate + H(+). Functionally, allows the formation of correctly charged Gln-tRNA(Gln) through the transamidation of misacylated Glu-tRNA(Gln) in the mitochondria. The reaction takes place in the presence of glutamine and ATP through an activated gamma-phospho-Glu-tRNA(Gln). Required for proper protein synthesis within the mitochondrion. The sequence is that of Glutamyl-tRNA(Gln) amidotransferase subunit F, mitochondrial from Scheffersomyces stipitis (strain ATCC 58785 / CBS 6054 / NBRC 10063 / NRRL Y-11545) (Yeast).